A 354-amino-acid polypeptide reads, in one-letter code: Thiamine thiazole synthase 1, chloroplastic (354 aa).

A chloroplast-targeting transit peptide spans 1-45 (MATAAASSLLKSSFAGSRLPAATRTTPASLVVATGPRGAGAGPIC). Residues Ala100, 120 to 121 (EQ), Gly128, and Val193 contribute to the substrate site. 2,3-didehydroalanine (Cys) is present on Cys222. Residues Asp224, His239, Met291, and 301-303 (RMG) each bind substrate.

The protein belongs to the THI4 family. Homooctamer. It depends on Fe cation as a cofactor. During the catalytic reaction, a sulfide is transferred from Cys-222 to a reaction intermediate, generating a dehydroalanine residue. Highest expression in developing embryos and green leaves and a very low level expression seen in endosperm, roots, etiolated shoots and immature ears.

The protein localises to the plastid. The protein resides in the chloroplast. The catalysed reaction is [ADP-thiazole synthase]-L-cysteine + glycine + NAD(+) = [ADP-thiazole synthase]-dehydroalanine + ADP-5-ethyl-4-methylthiazole-2-carboxylate + nicotinamide + 3 H2O + 2 H(+). Its function is as follows. Involved in biosynthesis of the thiamine precursor thiazole. Catalyzes the conversion of NAD and glycine to adenosine diphosphate 5-(2-hydroxyethyl)-4-methylthiazole-2-carboxylic acid (ADT), an adenylated thiazole intermediate. The reaction includes an iron-dependent sulfide transfer from a conserved cysteine residue of the protein to a thiazole intermediate. The enzyme can only undergo a single turnover, which suggests it is a suicide enzyme. May have additional roles in adaptation to various stress conditions and in DNA damage tolerance. In Zea mays (Maize), this protein is Thiamine thiazole synthase 1, chloroplastic.